Consider the following 92-residue polypeptide: Small ribosomal subunit protein bS20 (92 aa).

The interval 1 to 24 (MANTTSAKKATRKIARRTDVNKAR) is disordered.

Belongs to the bacterial ribosomal protein bS20 family.

Functionally, binds directly to 16S ribosomal RNA. This Rhizobium etli (strain ATCC 51251 / DSM 11541 / JCM 21823 / NBRC 15573 / CFN 42) protein is Small ribosomal subunit protein bS20.